The following is a 935-amino-acid chain: Probable mediator of RNA polymerase II transcription subunit 15c (935 aa).

Polar residues predominate over residues 1-13; the sequence is MEGNTNWKPNEQG. 5 disordered regions span residues 1-28, 170-190, 495-526, 548-611, and 635-654; these read MEGNTNWKPNEQGGNRDAANNRIDWRSQ, NLPTSRPNNRDQQGAFQVSSS, SSVQSLQKQKRFHHRQMQQQQPQQGNHQHQMQ, QQVS…PVPG, and SSSKLGTQETPLLFVPPPEP. Low complexity predominate over residues 511–526; that stretch reads MQQQQPQQGNHQHQMQ. Composition is skewed to polar residues over residues 548-577 and 635-644; these read QQVSSSQRQVPKQESNVSSSQIQNHSSPQL and SSSKLGTQET.

Belongs to the plant Mediator complex subunit 15 family. As to quaternary structure, component of the Mediator complex.

It is found in the nucleus. Its function is as follows. Component of the Mediator complex, a coactivator involved in the regulated transcription of nearly all RNA polymerase II-dependent genes. Mediator functions as a bridge to convey information from gene-specific regulatory proteins to the basal RNA polymerase II transcription machinery. The Mediator complex, having a compact conformation in its free form, is recruited to promoters by direct interactions with regulatory proteins and serves for the assembly of a functional preinitiation complex with RNA polymerase II and the general transcription factors. The protein is Probable mediator of RNA polymerase II transcription subunit 15c (MED15C) of Arabidopsis thaliana (Mouse-ear cress).